The chain runs to 91 residues: Defensin-like protein 95 (91 aa).

The signal sequence occupies residues 1–27; the sequence is MGSLKLSTFAIVVCLSILLISPIEVNG. Cystine bridges form between Cys-31/Cys-76, Cys-38/Cys-63, Cys-47/Cys-73, and Cys-51/Cys-75.

Belongs to the DEFL family.

It is found in the secreted. The polypeptide is Defensin-like protein 95 (Arabidopsis thaliana (Mouse-ear cress)).